The chain runs to 324 residues: Arginase (324 aa).

The Mn(2+) site is built by histidine 115, aspartate 142, histidine 144, and aspartate 146. Substrate contacts are provided by residues 144–148 (HTDLH), 155–157 (SGN), and aspartate 196. Aspartate 244 and aspartate 246 together coordinate Mn(2+). Residues threonine 258 and glutamate 289 each coordinate substrate.

The protein belongs to the arginase family. In terms of assembly, homohexamer. The cofactor is Mn(2+).

The catalysed reaction is L-arginine + H2O = urea + L-ornithine. The protein operates within nitrogen metabolism; urea cycle; L-ornithine and urea from L-arginine: step 1/1. This is Arginase (arcA) from Agrobacterium fabrum (strain C58 / ATCC 33970) (Agrobacterium tumefaciens (strain C58)).